Here is a 764-residue protein sequence, read N- to C-terminus: MVKSAVLGFPRIGKNRELKKATEAYWSGKTSAEELLATAKQLRLEHWKLQKAQGVDIIPSNDFSLYDQIMDHSFSFNVIPPRYRLSGLSSLDTYFAMGRGMQRAATADKAAVDVPAGEMVKWFDSNYHFLRPEVSEETDFKLSSTKALDEFLEAKEAGIITRPVLVGPVTYLFIAKAAKGSSIKPIELLPKLLPVYVELIKKLTEAGAEYIQIDEPILTLDLPQEILASYKEAYETLGKIGKLILTTYFGSLQSNADVLKGLPIAGVHVDVVRAPENLDRALAVLGENQIISVGVVSGRNIWKTDFQKATAIIEKAISAVGSERVQVASSSSILHIPHSLSGEDQINPEIKRWFAFAVEKCAELAILTKAANDGPASVRAELEANAADCKARAESPITNVEAVRERQSKVTPQMHERKSPFETRYAKQQASLKLPLFPTTTIGSFPQTKEIRVTRNRFAKGLISQEEYDAFIRKEISDVVKFQEEVGLDVLVHGEPERNDMVQYFGERMEGFVFTVNGWVQSYGSRCVRPPIIVGDVYRPAPMTVKESQYAQSITSKPMKGMLTAPITILRWSFPRDDVHDSVQAQQIALGLRDEVLDLEKAGIKVIQCDEPALREGLPLRRAEWDEYLKWAIDAFRLATAAVQDDTQIHSHFCYSDFNDIFDAIQRLDADVVSIENSKSDMKLLNVLSRYTSCIGPGLFDIHSPRVPPVSEFKERIDAIVKHVPKDHLWLNPDCGLKTRGWPETTADLKNMIAAAREAREQYA.

Residues Lys19 and Asn126 each contribute to the 5-methyltetrahydropteroyltri-L-glutamate site. The residue at position 182 (Ser182) is a Phosphoserine. A Phosphothreonine modification is found at Thr441. L-homocysteine is bound by residues Ile442–Ser444 and Glu495. L-methionine is bound by residues Ile442–Ser444 and Glu495. Residues Asp500, Tyr523, Arg526 to Cys527, and Trp572 contribute to the 5-methyltetrahydropteroyltri-L-glutamate site. Asp610 serves as a coordination point for L-homocysteine. Asp610 contacts L-methionine. Residues His652, Cys654, and Glu676 each contribute to the Zn(2+) site. The active-site Proton donor is the His703. Cys735 lines the Zn(2+) pocket.

This sequence belongs to the vitamin-B12 independent methionine synthase family. Requires Zn(2+) as cofactor.

It is found in the nucleus. The protein resides in the cytoplasm. The catalysed reaction is 5-methyltetrahydropteroyltri-L-glutamate + L-homocysteine = tetrahydropteroyltri-L-glutamate + L-methionine. It participates in amino-acid biosynthesis; L-methionine biosynthesis via de novo pathway; L-methionine from L-homocysteine (MetE route): step 1/1. Catalyzes the transfer of a methyl group from 5-methyltetrahydrofolate to homocysteine resulting in methionine formation. The chain is Probable 5-methyltetrahydropteroyltriglutamate--homocysteine methyltransferase (met26) from Schizosaccharomyces pombe (strain 972 / ATCC 24843) (Fission yeast).